A 312-amino-acid polypeptide reads, in one-letter code: Probable deoxyhypusine synthase (312 aa).

The active-site Nucleophile is lysine 285.

The protein belongs to the deoxyhypusine synthase family. It depends on NAD(+) as a cofactor.

It catalyses the reaction [eIF5A protein]-L-lysine + spermidine = [eIF5A protein]-deoxyhypusine + propane-1,3-diamine. Its pathway is protein modification; eIF5A hypusination. Catalyzes the NAD-dependent oxidative cleavage of spermidine and the subsequent transfer of the butylamine moiety of spermidine to the epsilon-amino group of a specific lysine residue of the eIF-5A precursor protein to form the intermediate deoxyhypusine residue. The protein is Probable deoxyhypusine synthase of Saccharolobus islandicus (strain Y.N.15.51 / Yellowstone #2) (Sulfolobus islandicus).